The sequence spans 427 residues: METFWLRLSFWVALVGGVISDNPESYSTNLSIHVDSVATFHGTELSFVVTTHQPTNLALPSNGSMHNYCPQQTKITSAFKYINTVISCTIFIVGMVGNATLLRIIYQNKCMRNGPNALIASLALGDLIYVVIDLPINVFKLLAGRWPFEQNDFGVFLCKLFPFLQKSSVGITVLNLCALSVDRYRAVASWSRVQGIGIPLVTAIEIVSIWILSFILAIPEAIGFVMVPFEYKGAQHRTCMLNATSKFMEFYQDVKDWWLFGFYFCMPLVCTAIFYTLMTCEMLNRRNGSLRIALSEHLKQRREVAKTVFCLVVIFALCWFPLHLSRILKKTVYDEMDTNRCELLSFLLLMDYIGINLATMNSCINPIALYFVSKKFKNCFQSCLCCCCYQSKSLMTSVPMNGTSIQWKNHEQNNHNTERSSHKDSIN.

The N-terminal stretch at 1–20 (METFWLRLSFWVALVGGVIS) is a signal peptide. The Extracellular segment spans residues 21-80 (DNPESYSTNLSIHVDSVATFHGTELSFVVTTHQPTNLALPSNGSMHNYCPQQTKITSAFK). N-linked (GlcNAc...) asparagine glycans are attached at residues asparagine 29 and asparagine 62. The chain crosses the membrane as a helical span at residues 81–102 (YINTVISCTIFIVGMVGNATLL). Residues 103 to 112 (RIIYQNKCMR) lie on the Cytoplasmic side of the membrane. Residues 113 to 132 (NGPNALIASLALGDLIYVVI) form a helical membrane-spanning segment. The Extracellular segment spans residues 133-159 (DLPINVFKLLAGRWPFEQNDFGVFLCK). A disulfide bridge connects residues cysteine 158 and cysteine 239. Residues 160-181 (LFPFLQKSSVGITVLNLCALSV) traverse the membrane as a helical segment. At 182 to 205 (DRYRAVASWSRVQGIGIPLVTAIE) the chain is on the cytoplasmic side. A helical membrane pass occupies residues 206–229 (IVSIWILSFILAIPEAIGFVMVPF). Topologically, residues 230–256 (EYKGAQHRTCMLNATSKFMEFYQDVKD) are extracellular. Residues 257-278 (WWLFGFYFCMPLVCTAIFYTLM) traverse the membrane as a helical segment. Residues 279-306 (TCEMLNRRNGSLRIALSEHLKQRREVAK) lie on the Cytoplasmic side of the membrane. Residues 307 to 328 (TVFCLVVIFALCWFPLHLSRIL) form a helical membrane-spanning segment. Over 329-347 (KKTVYDEMDTNRCELLSFL) the chain is Extracellular. A helical membrane pass occupies residues 348–372 (LLMDYIGINLATMNSCINPIALYFV). Topologically, residues 373-427 (SKKFKNCFQSCLCCCCYQSKSLMTSVPMNGTSIQWKNHEQNNHNTERSSHKDSIN) are cytoplasmic. Position 425 is a phosphoserine (serine 425).

This sequence belongs to the G-protein coupled receptor 1 family. Endothelin receptor subfamily. EDNRA sub-subfamily. As to quaternary structure, interacts with HDAC7 and KAT5.

Its subcellular location is the cell membrane. Functionally, receptor for endothelin-1. Mediates its action by association with G proteins that activate a phosphatidylinositol-calcium second messenger system. The rank order of binding affinities for ET-A is: ET1 &gt; ET2 &gt;&gt; ET3. This Bos taurus (Bovine) protein is Endothelin-1 receptor.